The chain runs to 195 residues: ATP-dependent Clp protease proteolytic subunit (195 aa).

Ser96 acts as the Nucleophile in catalysis. The active site involves His121.

This sequence belongs to the peptidase S14 family. In terms of assembly, fourteen ClpP subunits assemble into 2 heptameric rings which stack back to back to give a disk-like structure with a central cavity, resembling the structure of eukaryotic proteasomes.

It is found in the cytoplasm. The catalysed reaction is Hydrolysis of proteins to small peptides in the presence of ATP and magnesium. alpha-casein is the usual test substrate. In the absence of ATP, only oligopeptides shorter than five residues are hydrolyzed (such as succinyl-Leu-Tyr-|-NHMec, and Leu-Tyr-Leu-|-Tyr-Trp, in which cleavage of the -Tyr-|-Leu- and -Tyr-|-Trp bonds also occurs).. In terms of biological role, cleaves peptides in various proteins in a process that requires ATP hydrolysis. Has a chymotrypsin-like activity. Plays a major role in the degradation of misfolded proteins. The chain is ATP-dependent Clp protease proteolytic subunit from Elusimicrobium minutum (strain Pei191).